Reading from the N-terminus, the 934-residue chain is MTESKNSFNAKQTLEVGDKSYDYFALSAVKGMEKLPYSLKVLGENLLRTEDGANITADHINAIANWDPSAEPSIEIQFTPARVLMQDFTGVPCVVDLATMREAVKTLGGDPDKVNPLNPAEMVIDHSVIIEAFGSTLALAKNVEIEYERNEERYQFLRWGSKAFSNFRVVPPGTGIVHQVNIENLARVVFDNNGLAYPDTCIGTDSHTTMENGLGILGWGVGGIEAEAAMLGQPVSMLIPRVVGFKLTGEIPAGVTATDVVLTITEMLREHGVVQKFVEFYGNGVKSIPLANRATIGNMSPEFGSTCAIFPIDEETVKYMHLTGRSEEQVALVEAYAKAQGMWLEQDAPEAEYSEYLELDLSTVVPSIAGPKRPQDRILLTEAKEQFRKDLPDYCSAEPVDESLPAKRMDSEGAVQKEGEDVAGYNSSRAGHGESAAEGAAGRQSNPVVVSSPNGGEYTLDHGMVAIASITSCTNTSNPSVMIGAGLIARKAAAKGLKAKPWVKTICAPGSQVVDGYYKRADLWKDLEALGFYLSGFGCTTCIGNSGPLPEEISAAINENDLTATAVLSGNRNFEGRISPDVKMNYLVSPIMVIAYAIAGTMDFDFETQPLGQDIDGNDVFLKDIWPSTEEIEETIAGAISRELYEADYADVFKGDEQWQNLPTPEGKTFDWDEKSTYIRKAPYFDGMTMEPAPVSDIKGARVLAKLGDSVTTDHISPASSIKPGTPAAQYLDENGVARNDYNSLGSRRGNHEVMMRGTFANIRLQNQLVDIAGGYTRDFTKNGEQAFIFDACQNYKAAGIPLVVIAGKEYGTGSSRDWAAKGTNLLGVKAVITESFERIHRSNLIGMGVIPLQFPAGESHASLGLDGTETFDIEGIEELNNGVTPKTVHVTATKESGDQVEFDAVVRIDTPGEADYYRNGGILQYVLRNMINA.

Positions 398 to 454 (EPVDESLPAKRMDSEGAVQKEGEDVAGYNSSRAGHGESAAEGAAGRQSNPVVVSSPN) are disordered. Residues 404–420 (LPAKRMDSEGAVQKEGE) are compositionally biased toward basic and acidic residues. The span at 427-445 (SSRAGHGESAAEGAAGRQS) shows a compositional bias: low complexity. [4Fe-4S] cluster is bound by residues Cys473, Cys539, and Cys542.

The protein belongs to the aconitase/IPM isomerase family. In terms of assembly, monomer. Requires [4Fe-4S] cluster as cofactor.

It catalyses the reaction citrate = D-threo-isocitrate. The enzyme catalyses (2S,3R)-3-hydroxybutane-1,2,3-tricarboxylate = 2-methyl-cis-aconitate + H2O. Its pathway is carbohydrate metabolism; tricarboxylic acid cycle; isocitrate from oxaloacetate: step 2/2. It functions in the pathway organic acid metabolism; propanoate degradation. Functionally, involved in the catabolism of short chain fatty acids (SCFA) via the tricarboxylic acid (TCA)(acetyl degradation route) and probably via the 2-methylcitrate cycle I (propionate degradation route). Catalyzes the reversible isomerization of citrate to isocitrate via cis-aconitate. Could catalyze the hydration of 2-methyl-cis-aconitate to yield (2R,3S)-2-methylisocitrate. The apo form of AcnA functions as a RNA-binding regulatory protein. This chain is Aconitate hydratase A (acn), found in Corynebacterium diphtheriae (strain ATCC 700971 / NCTC 13129 / Biotype gravis).